The following is a 324-amino-acid chain: Biotin synthase (324 aa).

The 228-residue stretch at 37-264 (NEVQVAALMN…ASYVRLAAGR (228 aa)) folds into the Radical SAM core domain. [4Fe-4S] cluster contacts are provided by Cys-52, Cys-56, and Cys-59. 4 residues coordinate [2Fe-2S] cluster: Cys-96, Cys-127, Cys-187, and Arg-259.

Belongs to the radical SAM superfamily. Biotin synthase family. In terms of assembly, homodimer. [4Fe-4S] cluster is required as a cofactor. Requires [2Fe-2S] cluster as cofactor.

It carries out the reaction (4R,5S)-dethiobiotin + (sulfur carrier)-SH + 2 reduced [2Fe-2S]-[ferredoxin] + 2 S-adenosyl-L-methionine = (sulfur carrier)-H + biotin + 2 5'-deoxyadenosine + 2 L-methionine + 2 oxidized [2Fe-2S]-[ferredoxin]. It functions in the pathway cofactor biosynthesis; biotin biosynthesis; biotin from 7,8-diaminononanoate: step 2/2. Catalyzes the conversion of dethiobiotin (DTB) to biotin by the insertion of a sulfur atom into dethiobiotin via a radical-based mechanism. The polypeptide is Biotin synthase (Anaplasma marginale (strain Florida)).